We begin with the raw amino-acid sequence, 309 residues long: Ribosomal RNA small subunit methyltransferase H (309 aa).

Residues 33–35 (GGH), Asp-53, Phe-79, Asp-100, and Gln-107 each bind S-adenosyl-L-methionine.

The protein belongs to the methyltransferase superfamily. RsmH family.

Its subcellular location is the cytoplasm. It catalyses the reaction cytidine(1402) in 16S rRNA + S-adenosyl-L-methionine = N(4)-methylcytidine(1402) in 16S rRNA + S-adenosyl-L-homocysteine + H(+). Specifically methylates the N4 position of cytidine in position 1402 (C1402) of 16S rRNA. The chain is Ribosomal RNA small subunit methyltransferase H from Clostridium botulinum (strain Kyoto / Type A2).